Here is a 370-residue protein sequence, read N- to C-terminus: Probable aspartic-type endopeptidase ARB_04018 (370 aa).

A signal peptide spans 1 to 21 (MWHSPFSTAFTLFLGFFTLTL). 2 N-linked (GlcNAc...) asparagine glycosylation sites follow: asparagine 80 and asparagine 102. Residues 94–367 (FVNEITIGND…DHDGPKMGFA (274 aa)) form the Peptidase A1 domain. Aspartate 110 is a catalytic residue. Asparagine 251 carries an N-linked (GlcNAc...) asparagine glycan. The active site involves aspartate 261. The N-linked (GlcNAc...) asparagine glycan is linked to asparagine 298.

It belongs to the peptidase A1 family.

It is found in the secreted. In terms of biological role, probable aspartic-type endopeptidase which contributes to virulence. The polypeptide is Probable aspartic-type endopeptidase ARB_04018 (Arthroderma benhamiae (strain ATCC MYA-4681 / CBS 112371) (Trichophyton mentagrophytes)).